The sequence spans 165 residues: Protein SprT (165 aa).

The SprT-like domain maps to 20–163; it reads EKLAQANLKL…RCVHCGEQLV (144 aa). Residue His-78 coordinates Zn(2+). Glu-79 is an active-site residue. His-82 serves as a coordination point for Zn(2+).

It belongs to the SprT family. Requires Zn(2+) as cofactor.

Its subcellular location is the cytoplasm. The sequence is that of Protein SprT from Shigella boydii serotype 18 (strain CDC 3083-94 / BS512).